A 1372-amino-acid chain; its full sequence is DNA-directed RNA polymerase subunit beta (1372 aa).

The protein belongs to the RNA polymerase beta chain family. The RNAP catalytic core consists of 2 alpha, 1 beta, 1 beta' and 1 omega subunit. When a sigma factor is associated with the core the holoenzyme is formed, which can initiate transcription.

The catalysed reaction is RNA(n) + a ribonucleoside 5'-triphosphate = RNA(n+1) + diphosphate. Its function is as follows. DNA-dependent RNA polymerase catalyzes the transcription of DNA into RNA using the four ribonucleoside triphosphates as substrates. The protein is DNA-directed RNA polymerase subunit beta of Rickettsia bellii (strain OSU 85-389).